Consider the following 80-residue polypeptide: Sulfur carrier protein TusA (80 aa).

The active-site Cysteine persulfide intermediate is the cysteine 17.

Belongs to the sulfur carrier protein TusA family.

Its subcellular location is the cytoplasm. Sulfur carrier protein which probably makes part of a sulfur-relay system. This is Sulfur carrier protein TusA from Pseudomonas putida (strain W619).